We begin with the raw amino-acid sequence, 264 residues long: Phosphonoacetaldehyde hydrolase (264 aa).

Residue D9 is the Nucleophile of the active site. Mg(2+)-binding residues include D9 and A11. The active-site Schiff-base intermediate with substrate is K50. A Mg(2+)-binding site is contributed by D183.

The protein belongs to the HAD-like hydrolase superfamily. PhnX family. In terms of assembly, homodimer. The cofactor is Mg(2+).

It catalyses the reaction phosphonoacetaldehyde + H2O = acetaldehyde + phosphate + H(+). Functionally, involved in phosphonate degradation. The chain is Phosphonoacetaldehyde hydrolase from Bacillus thuringiensis (strain Al Hakam).